The chain runs to 284 residues: Hydrogenase expression/formation protein HupQ (284 aa).

Residues 1-23 form a disordered region; that stretch reads MIGTQSILPPGFGPGSHGEEDRL.

The protein belongs to the HupH/HyaF family.

The polypeptide is Hydrogenase expression/formation protein HupQ (hupQ) (Azotobacter chroococcum mcd 1).